The chain runs to 312 residues: Ubiquinone biosynthesis protein COQ9, mitochondrial (312 aa).

The transit peptide at 1–45 directs the protein to the mitochondrion; it reads MAATAAVSGVLRRLGWRLLQLRCLPVARCQSPLMPRAFHTAVGFR. An SIFI-degron motif is present at residues 17–32; the sequence is RLLQLRCLPVARCQSP. Residues 43 to 92 form a disordered region; sequence GFRSSEEQRQQPPHSSQQHSETQGPEFSRPPPRYTDQSGEEEEDYESEEQ. Positions 52–63 are enriched in low complexity; the sequence is QQPPHSSQQHSE. At serine 80 the chain carries Phosphoserine. Residues 80–91 are compositionally biased toward acidic residues; sequence SGEEEEDYESEE. N6-acetyllysine is present on lysine 169. Arginine 238 contacts a 1,2-diacylglycero-3-phosphoethanolamine.

The protein belongs to the COQ9 family. As to quaternary structure, homodimer. Heterodimer; two heterodimers of COQ7:COQ9 come together on the same side of the lipid pseudo-bilayer and form a curved tetramer with a hydrophobic surface suitable for membrane interaction. These two tetramers assemble into a soluble octamer with a pseudo-bilayer of lipids captured within. Interacts with COQ7; this interaction allows ubiquinone (CoQ) isoprene intermediates presentation to COQ7 and facilitates the COQ7-mediated hydroxylase step. In response to mitochondrial stress, the precursor protein is ubiquitinated by the SIFI complex in the cytoplasm before mitochondrial import, leading to its degradation. Within the SIFI complex, UBR4 initiates ubiquitin chain that are further elongated or branched by KCMF1.

It localises to the mitochondrion. It functions in the pathway cofactor biosynthesis; ubiquinone biosynthesis. In terms of biological role, membrane-associated protein that warps the membrane surface to access and bind aromatic isoprenes with high specificity, including ubiquinone (CoQ) isoprene intermediates and presents them directly to COQ7, therefore facilitating the COQ7-mediated hydroxylase step. Participates in the biosynthesis of coenzyme Q, also named ubiquinone, an essential lipid-soluble electron transporter for aerobic cellular respiration. This is Ubiquinone biosynthesis protein COQ9, mitochondrial from Rattus norvegicus (Rat).